The sequence spans 215 residues: NADH-quinone oxidoreductase subunit C (215 aa).

The protein belongs to the complex I 30 kDa subunit family. As to quaternary structure, NDH-1 is composed of 14 different subunits. Subunits NuoB, C, D, E, F, and G constitute the peripheral sector of the complex.

The protein localises to the cell inner membrane. The catalysed reaction is a quinone + NADH + 5 H(+)(in) = a quinol + NAD(+) + 4 H(+)(out). In terms of biological role, NDH-1 shuttles electrons from NADH, via FMN and iron-sulfur (Fe-S) centers, to quinones in the respiratory chain. The immediate electron acceptor for the enzyme in this species is believed to be ubiquinone. Couples the redox reaction to proton translocation (for every two electrons transferred, four hydrogen ions are translocated across the cytoplasmic membrane), and thus conserves the redox energy in a proton gradient. The chain is NADH-quinone oxidoreductase subunit C from Methylobacterium sp. (strain 4-46).